A 233-amino-acid polypeptide reads, in one-letter code: 5-demethoxyubiquinone hydroxylase, mitochondrial (233 aa).

The transit peptide at methionine 1–phenylalanine 15 directs the protein to the mitochondrion. Phosphoserine occurs at positions 20 and 28. Threonine 32 is modified (phosphothreonine). Fe cation-binding residues include glutamate 63, glutamate 95, histidine 98, glutamate 147, glutamate 194, and histidine 197.

This sequence belongs to the COQ7 family. Component of a multi-subunit COQ enzyme complex, composed of at least COQ3, COQ4, COQ5, COQ6, COQ7 and COQ9. The cofactor is Fe cation. In terms of processing, phosphorylated. Dephosphorylated by PTC7; dephosphorylation is essential for enzyme activation.

It localises to the mitochondrion inner membrane. The enzyme catalyses a 5-methoxy-2-methyl-3-(all-trans-polyprenyl)benzene-1,4-diol + AH2 + O2 = a 3-demethylubiquinol + A + H2O. It carries out the reaction a 5-methoxy-2-methyl-3-(all-trans-polyprenyl)benzoquinone + NADH + O2 = a 3-demethylubiquinone + NAD(+) + H2O. The protein operates within cofactor biosynthesis; ubiquinone biosynthesis. With respect to regulation, dephosphorylation by PTC7 leads to activation. Functionally, catalyzes the hydroxylation of 2-hexaprenyl-3-methyl-6-methoxy-1,4-benzoquinol (DMQH2) during ubiquinone biosynthesis. Also catalyzes the hydroxylation of the 5-methoxy-2-methyl-3-(all-trans-polyprenyl)benzoquinone at the C6 position and participates in the biosynthesis of ubiquinone. Also has a structural role in the COQ enzyme complex, stabilizing COQ3 and COQ4 polypeptides. The polypeptide is 5-demethoxyubiquinone hydroxylase, mitochondrial (Saccharomyces cerevisiae (strain ATCC 204508 / S288c) (Baker's yeast)).